We begin with the raw amino-acid sequence, 323 residues long: tRNA dimethylallyltransferase (323 aa).

Residue 12–19 coordinates ATP; that stretch reads GPTASGKT. 14 to 19 provides a ligand contact to substrate; that stretch reads TASGKT. Interaction with substrate tRNA regions lie at residues 37–40 and 161–165; these read DSAL and QRLVR.

Belongs to the IPP transferase family. Monomer. Mg(2+) is required as a cofactor.

It catalyses the reaction adenosine(37) in tRNA + dimethylallyl diphosphate = N(6)-dimethylallyladenosine(37) in tRNA + diphosphate. Its function is as follows. Catalyzes the transfer of a dimethylallyl group onto the adenine at position 37 in tRNAs that read codons beginning with uridine, leading to the formation of N6-(dimethylallyl)adenosine (i(6)A). This Azotobacter vinelandii (strain DJ / ATCC BAA-1303) protein is tRNA dimethylallyltransferase.